Here is an 889-residue protein sequence, read N- to C-terminus: Alanine--tRNA ligase (889 aa).

Zn(2+)-binding residues include His574, His578, Cys676, and His680.

The protein belongs to the class-II aminoacyl-tRNA synthetase family. It depends on Zn(2+) as a cofactor.

It is found in the cytoplasm. The enzyme catalyses tRNA(Ala) + L-alanine + ATP = L-alanyl-tRNA(Ala) + AMP + diphosphate. Functionally, catalyzes the attachment of alanine to tRNA(Ala) in a two-step reaction: alanine is first activated by ATP to form Ala-AMP and then transferred to the acceptor end of tRNA(Ala). Also edits incorrectly charged Ser-tRNA(Ala) and Gly-tRNA(Ala) via its editing domain. In Thermobifida fusca (strain YX), this protein is Alanine--tRNA ligase.